We begin with the raw amino-acid sequence, 1002 residues long: SIT4-associating protein SAP155 (1002 aa).

Disordered regions lie at residues 51 to 131 (GTSD…APMM), 214 to 273 (QQQL…ANED), 609 to 645 (EQLK…ESDY), 868 to 901 (DNTT…GGGQ), and 940 to 1002 (NTEN…YDHE). Position 58 is a phosphoserine (Ser58). Basic and acidic residues predominate over residues 62 to 97 (EYSHGDEVKTARGDQKSRFEKDDQQERYEKEEEERS). Residues 98-114 (MNSSESSTTSFSSGSTS) show a composition bias toward low complexity. Residues 220–241 (SSQEDVYVESDTEQEEEKEDDN) are compositionally biased toward acidic residues. The residue at position 255 (Ser255) is a Phosphoserine. Positions 262–273 (NNNDDDDDANED) are enriched in acidic residues. Positions 609 to 626 (EQLKTKHSPTRDTDHDLK) are enriched in basic and acidic residues. Thr613 and Thr618 each carry phosphothreonine. Over residues 635–645 (DNNDNDDESDY) the composition is skewed to acidic residues. The span at 868 to 885 (DNTTVLTPNGDASNNNEI) shows a compositional bias: polar residues. Over residues 956 to 976 (SNSNINNTNHNSNNSNNNDNN) the composition is skewed to low complexity. The segment covering 991–1002 (EDADNDNDYDHE) has biased composition (acidic residues).

The protein belongs to the SAPS family. As to quaternary structure, associates with the SIT4 protein phosphatase catalytic subunit in a cell-cycle-dependent manner. In terms of processing, hyperphosphorylated in the absence of SIT4.

It localises to the cytoplasm. In terms of biological role, positive regulator of protein phosphatase SIT4. Involved in directing expression of TOR-repressed genes and in dephosphorylation of NPR1 in response to nutrient starvation. Negatively modulates K(+) efflux of the cell by the Na(+)-K(+)/H(+) antiporter NHA1. The protein is SIT4-associating protein SAP155 (SAP155) of Saccharomyces cerevisiae (strain ATCC 204508 / S288c) (Baker's yeast).